The chain runs to 335 residues: Beta-ketoacyl-[acyl-carrier-protein] synthase III (335 aa).

Residues C118 and H259 contribute to the active site. The interval 260-264 is ACP-binding; it reads QANER. N289 is an active-site residue.

The protein belongs to the thiolase-like superfamily. FabH family. In terms of assembly, homodimer.

It is found in the cytoplasm. The enzyme catalyses malonyl-[ACP] + acetyl-CoA + H(+) = 3-oxobutanoyl-[ACP] + CO2 + CoA. The protein operates within lipid metabolism; fatty acid biosynthesis. Functionally, catalyzes the condensation reaction of fatty acid synthesis by the addition to an acyl acceptor of two carbons from malonyl-ACP. Catalyzes the first condensation reaction which initiates fatty acid synthesis and may therefore play a role in governing the total rate of fatty acid production. Possesses both acetoacetyl-ACP synthase and acetyl transacylase activities. Its substrate specificity determines the biosynthesis of branched-chain and/or straight-chain of fatty acids. In Chlamydia caviae (strain ATCC VR-813 / DSM 19441 / 03DC25 / GPIC) (Chlamydophila caviae), this protein is Beta-ketoacyl-[acyl-carrier-protein] synthase III.